We begin with the raw amino-acid sequence, 275 residues long: MPELPEVETTRRGIDPVITGQTLRRLVVREPRMRWPIPADLPSLLTDRPVLATGRRGKYLLLRFEHGVQIVHLGMSGSLRRVAMDEAPRKHDHVDWVFDHAILRLHDPRRFGAVLWHPNTDGPVEAHPLLIGLGIEPFDPRFDGKWLHDHFRDKRVAVKQALLAGHAVVGVGNIYASECLFRAGIDPRTPAGKLSRPRCERLAQAVRATLADALASGGSTLRDYVGASGEPGAYFAIHAAVYERAGLACRVCGTPIRRLVQGQRATYFCPHCQKR.

Catalysis depends on Pro2, which acts as the Schiff-base intermediate with DNA. Glu3 serves as the catalytic Proton donor. The active-site Proton donor; for beta-elimination activity is Lys58. The DNA site is built by His91, Arg109, and Lys154. An FPG-type zinc finger spans residues 240 to 274; sequence AVYERAGLACRVCGTPIRRLVQGQRATYFCPHCQK. Catalysis depends on Arg264, which acts as the Proton donor; for delta-elimination activity.

The protein belongs to the FPG family. Monomer. Zn(2+) is required as a cofactor.

It carries out the reaction Hydrolysis of DNA containing ring-opened 7-methylguanine residues, releasing 2,6-diamino-4-hydroxy-5-(N-methyl)formamidopyrimidine.. The catalysed reaction is 2'-deoxyribonucleotide-(2'-deoxyribose 5'-phosphate)-2'-deoxyribonucleotide-DNA = a 3'-end 2'-deoxyribonucleotide-(2,3-dehydro-2,3-deoxyribose 5'-phosphate)-DNA + a 5'-end 5'-phospho-2'-deoxyribonucleoside-DNA + H(+). Involved in base excision repair of DNA damaged by oxidation or by mutagenic agents. Acts as a DNA glycosylase that recognizes and removes damaged bases. Has a preference for oxidized purines, such as 7,8-dihydro-8-oxoguanine (8-oxoG). Has AP (apurinic/apyrimidinic) lyase activity and introduces nicks in the DNA strand. Cleaves the DNA backbone by beta-delta elimination to generate a single-strand break at the site of the removed base with both 3'- and 5'-phosphates. The protein is Formamidopyrimidine-DNA glycosylase of Bordetella avium (strain 197N).